A 493-amino-acid chain; its full sequence is Leucine-rich repeat-containing protein 14 (493 aa).

An LRR 1; degenerate repeat occupies 111–146 (KHTLRVLDMTGLLDDGVEQDPGTMSMWDCTAAVART). One copy of the LRR 2; degenerate repeat lies at 194–218 (RLCCRDLRAEDLPMRNTVALLQLLD). One copy of the LRR 3; degenerate repeat lies at 219–246 (AGCLRRVDLRFNNLGLRGLSVIIPHVAR). One copy of the LRR 4; degenerate repeat lies at 247-282 (FQHLASLRLHYVHGDSRQPSVDGEDNFRYFLAQMGR). LRR repeat units lie at residues 283–307 (FTCL…LSTL), 308–339 (QSPL…VHLK), 340–360 (KLDL…QGLL), 364–391 (AATL…VLTR), and 392–416 (CASL…LLRD).

The protein belongs to the PRAME family. LRRC14 subfamily. Interacts with IKBKB; disrupts IKBKB-IKBKG interaction preventing I-kappa-B-kinase (IKK) core complex formation and leading to a decrease of IKBKB phosphorylation and NF-kappaB activation. Interacts with CHUK.

Its subcellular location is the cytoplasm. Functionally, negatively regulates Toll-like receptor-mediated NF-kappa-B signaling by disrupting IKK core complex formation through interaction with IKBKB. This is Leucine-rich repeat-containing protein 14 from Bos taurus (Bovine).